Consider the following 129-residue polypeptide: Glycine cleavage system H protein (129 aa).

A Lipoyl-binding domain is found at 24 to 106; that stretch reads HAVVGITDFA…YDGGWLFKLA (83 aa). Lys-65 is subject to N6-lipoyllysine.

The protein belongs to the GcvH family. The glycine cleavage system is composed of four proteins: P, T, L and H. (R)-lipoate is required as a cofactor.

The glycine cleavage system catalyzes the degradation of glycine. The H protein shuttles the methylamine group of glycine from the P protein to the T protein. The polypeptide is Glycine cleavage system H protein (Hydrogenovibrio crunogenus (strain DSM 25203 / XCL-2) (Thiomicrospira crunogena)).